A 391-amino-acid polypeptide reads, in one-letter code: Processive diacylglycerol beta-glucosyltransferase (391 aa).

Belongs to the glycosyltransferase 28 family. UgtP subfamily.

It localises to the cell membrane. The catalysed reaction is a 1,2-diacyl-3-O-(beta-D-glucopyranosyl)-sn-glycerol + UDP-alpha-D-glucose = a 1,2-diacyl-3-O-(beta-D-Glc-(1-&gt;6)-beta-D-Glc)-sn-glycerol + UDP + H(+). It catalyses the reaction a 1,2-diacyl-sn-glycerol + UDP-alpha-D-glucose = a 1,2-diacyl-3-O-(beta-D-glucopyranosyl)-sn-glycerol + UDP + H(+). Its pathway is glycolipid metabolism; diglucosyl-diacylglycerol biosynthesis. In terms of biological role, processive glucosyltransferase involved in the biosynthesis of both the bilayer- and non-bilayer-forming membrane glucolipids. Is able to successively transfer two glucosyl residues to diacylglycerol (DAG), thereby catalyzing the formation of beta-monoglucosyl-DAG (3-O-(beta-D-glucopyranosyl)-1,2-diacyl-sn-glycerol) and beta-diglucosyl-DAG (3-O-(beta-D-glucopyranosyl-beta-(1-&gt;6)-D-glucopyranosyl)-1,2-diacyl-sn-glycerol). Beta-diglucosyl-DAG is the predominant glycolipid found in Bacillales and is also used as a membrane anchor for lipoteichoic acid (LTA). The sequence is that of Processive diacylglycerol beta-glucosyltransferase from Staphylococcus carnosus (strain TM300).